Consider the following 154-residue polypeptide: 6,7-dimethyl-8-ribityllumazine synthase (154 aa).

5-amino-6-(D-ribitylamino)uracil is bound by residues Phe26, 60 to 62 (ALE), and 84 to 86 (CII). 89 to 90 (ET) is a binding site for (2S)-2-hydroxy-3-oxobutyl phosphate. The Proton donor role is filled by His92. Asn117 provides a ligand contact to 5-amino-6-(D-ribitylamino)uracil. Arg131 is a (2S)-2-hydroxy-3-oxobutyl phosphate binding site.

This sequence belongs to the DMRL synthase family.

The enzyme catalyses (2S)-2-hydroxy-3-oxobutyl phosphate + 5-amino-6-(D-ribitylamino)uracil = 6,7-dimethyl-8-(1-D-ribityl)lumazine + phosphate + 2 H2O + H(+). The protein operates within cofactor biosynthesis; riboflavin biosynthesis; riboflavin from 2-hydroxy-3-oxobutyl phosphate and 5-amino-6-(D-ribitylamino)uracil: step 1/2. Functionally, catalyzes the formation of 6,7-dimethyl-8-ribityllumazine by condensation of 5-amino-6-(D-ribitylamino)uracil with 3,4-dihydroxy-2-butanone 4-phosphate. This is the penultimate step in the biosynthesis of riboflavin. The sequence is that of 6,7-dimethyl-8-ribityllumazine synthase from Acidovorax sp. (strain JS42).